An 83-amino-acid chain; its full sequence is DNA-directed RNA polymerase subunit Rpo5 (83 aa).

This sequence belongs to the archaeal Rpo5/eukaryotic RPB5 RNA polymerase subunit family. As to quaternary structure, part of the RNA polymerase complex.

Its subcellular location is the cytoplasm. The catalysed reaction is RNA(n) + a ribonucleoside 5'-triphosphate = RNA(n+1) + diphosphate. In terms of biological role, DNA-dependent RNA polymerase (RNAP) catalyzes the transcription of DNA into RNA using the four ribonucleoside triphosphates as substrates. This chain is DNA-directed RNA polymerase subunit Rpo5, found in Nitrosopumilus maritimus (strain SCM1).